The chain runs to 279 residues: Ribose-phosphate pyrophosphokinase (279 aa).

ATP contacts are provided by residues 31–33 and 88–89; these read DGE and RQ. His121 and Asp159 together coordinate Mg(2+). Lys182 is a catalytic residue. D-ribose 5-phosphate-binding positions include Arg184, Asp208, and 212-216; that span reads STGGT.

The protein belongs to the ribose-phosphate pyrophosphokinase family. Class III (archaeal) subfamily. It depends on Mg(2+) as a cofactor.

The protein resides in the cytoplasm. It carries out the reaction D-ribose 5-phosphate + ATP = 5-phospho-alpha-D-ribose 1-diphosphate + AMP + H(+). It participates in metabolic intermediate biosynthesis; 5-phospho-alpha-D-ribose 1-diphosphate biosynthesis; 5-phospho-alpha-D-ribose 1-diphosphate from D-ribose 5-phosphate (route I): step 1/1. Functionally, involved in the biosynthesis of the central metabolite phospho-alpha-D-ribosyl-1-pyrophosphate (PRPP) via the transfer of pyrophosphoryl group from ATP to 1-hydroxyl of ribose-5-phosphate (Rib-5-P). The sequence is that of Ribose-phosphate pyrophosphokinase from Pyrococcus furiosus (strain ATCC 43587 / DSM 3638 / JCM 8422 / Vc1).